An 89-amino-acid chain; its full sequence is DNA-directed RNA polymerase subunit omega (89 aa).

Belongs to the RNA polymerase subunit omega family. The RNAP catalytic core consists of 2 alpha, 1 beta, 1 beta' and 1 omega subunit. When a sigma factor is associated with the core the holoenzyme is formed, which can initiate transcription.

The catalysed reaction is RNA(n) + a ribonucleoside 5'-triphosphate = RNA(n+1) + diphosphate. Its function is as follows. Promotes RNA polymerase assembly. Latches the N- and C-terminal regions of the beta' subunit thereby facilitating its interaction with the beta and alpha subunits. The polypeptide is DNA-directed RNA polymerase subunit omega (rpoZ) (Pasteurella multocida (strain Pm70)).